The sequence spans 511 residues: ATP synthase subunit alpha (511 aa).

169-176 is a binding site for ATP; that stretch reads GDRQTGKT.

It belongs to the ATPase alpha/beta chains family. As to quaternary structure, F-type ATPases have 2 components, CF(1) - the catalytic core - and CF(0) - the membrane proton channel. CF(1) has five subunits: alpha(3), beta(3), gamma(1), delta(1), epsilon(1). CF(0) has three main subunits: a(1), b(2) and c(9-12). The alpha and beta chains form an alternating ring which encloses part of the gamma chain. CF(1) is attached to CF(0) by a central stalk formed by the gamma and epsilon chains, while a peripheral stalk is formed by the delta and b chains.

The protein localises to the cell inner membrane. It carries out the reaction ATP + H2O + 4 H(+)(in) = ADP + phosphate + 5 H(+)(out). Produces ATP from ADP in the presence of a proton gradient across the membrane. The alpha chain is a regulatory subunit. The sequence is that of ATP synthase subunit alpha from Paracoccus denitrificans (strain Pd 1222).